Here is a 172-residue protein sequence, read N- to C-terminus: Putative methyltransferase Mtx subunit A (172 aa).

Belongs to the MtrA family. As to quaternary structure, may be part of a complex composed of 3 subunits; MtxA, MtxH and MtxX.

The sequence is that of Putative methyltransferase Mtx subunit A (mtxA) from Methanosarcina mazei (strain ATCC BAA-159 / DSM 3647 / Goe1 / Go1 / JCM 11833 / OCM 88) (Methanosarcina frisia).